The following is a 205-amino-acid chain: Large ribosomal subunit protein uL4 (205 aa).

The segment at I56–R78 is disordered.

The protein belongs to the universal ribosomal protein uL4 family. As to quaternary structure, part of the 50S ribosomal subunit.

In terms of biological role, one of the primary rRNA binding proteins, this protein initially binds near the 5'-end of the 23S rRNA. It is important during the early stages of 50S assembly. It makes multiple contacts with different domains of the 23S rRNA in the assembled 50S subunit and ribosome. Its function is as follows. Forms part of the polypeptide exit tunnel. This Ehrlichia canis (strain Jake) protein is Large ribosomal subunit protein uL4.